The chain runs to 450 residues: UDP-N-acetylmuramoylalanine--D-glutamate ligase (450 aa).

115 to 121 is a binding site for ATP; that stretch reads GTNGKTT.

It belongs to the MurCDEF family.

It is found in the cytoplasm. It catalyses the reaction UDP-N-acetyl-alpha-D-muramoyl-L-alanine + D-glutamate + ATP = UDP-N-acetyl-alpha-D-muramoyl-L-alanyl-D-glutamate + ADP + phosphate + H(+). It functions in the pathway cell wall biogenesis; peptidoglycan biosynthesis. Cell wall formation. Catalyzes the addition of glutamate to the nucleotide precursor UDP-N-acetylmuramoyl-L-alanine (UMA). This is UDP-N-acetylmuramoylalanine--D-glutamate ligase from Lachnospira eligens (strain ATCC 27750 / DSM 3376 / VPI C15-48 / C15-B4) (Eubacterium eligens).